The following is a 156-amino-acid chain: ATP synthase subunit b (156 aa).

A helical membrane pass occupies residues 7-26; it reads LIGQLIAFALFVAFCMKYVW.

The protein belongs to the ATPase B chain family. In terms of assembly, F-type ATPases have 2 components, F(1) - the catalytic core - and F(0) - the membrane proton channel. F(1) has five subunits: alpha(3), beta(3), gamma(1), delta(1), epsilon(1). F(0) has three main subunits: a(1), b(2) and c(10-14). The alpha and beta chains form an alternating ring which encloses part of the gamma chain. F(1) is attached to F(0) by a central stalk formed by the gamma and epsilon chains, while a peripheral stalk is formed by the delta and b chains.

The protein localises to the cell inner membrane. Functionally, f(1)F(0) ATP synthase produces ATP from ADP in the presence of a proton or sodium gradient. F-type ATPases consist of two structural domains, F(1) containing the extramembraneous catalytic core and F(0) containing the membrane proton channel, linked together by a central stalk and a peripheral stalk. During catalysis, ATP synthesis in the catalytic domain of F(1) is coupled via a rotary mechanism of the central stalk subunits to proton translocation. Component of the F(0) channel, it forms part of the peripheral stalk, linking F(1) to F(0). This is ATP synthase subunit b from Haemophilus ducreyi (strain 35000HP / ATCC 700724).